Reading from the N-terminus, the 250-residue chain is 23S rRNA (guanosine-2'-O-)-methyltransferase RlmB (250 aa).

S-adenosyl-L-methionine-binding residues include Gly198, Leu218, and Leu227.

Belongs to the class IV-like SAM-binding methyltransferase superfamily. RNA methyltransferase TrmH family. RlmB subfamily.

It is found in the cytoplasm. It catalyses the reaction guanosine(2251) in 23S rRNA + S-adenosyl-L-methionine = 2'-O-methylguanosine(2251) in 23S rRNA + S-adenosyl-L-homocysteine + H(+). Specifically methylates the ribose of guanosine 2251 in 23S rRNA. This is 23S rRNA (guanosine-2'-O-)-methyltransferase RlmB from Pseudomonas syringae pv. tomato (strain ATCC BAA-871 / DC3000).